We begin with the raw amino-acid sequence, 265 residues long: Tryptophan synthase alpha chain (265 aa).

Residues E49 and D60 each act as proton acceptor in the active site.

This sequence belongs to the TrpA family. Tetramer of two alpha and two beta chains.

The catalysed reaction is (1S,2R)-1-C-(indol-3-yl)glycerol 3-phosphate + L-serine = D-glyceraldehyde 3-phosphate + L-tryptophan + H2O. The protein operates within amino-acid biosynthesis; L-tryptophan biosynthesis; L-tryptophan from chorismate: step 5/5. Its function is as follows. The alpha subunit is responsible for the aldol cleavage of indoleglycerol phosphate to indole and glyceraldehyde 3-phosphate. The polypeptide is Tryptophan synthase alpha chain (Polynucleobacter asymbioticus (strain DSM 18221 / CIP 109841 / QLW-P1DMWA-1) (Polynucleobacter necessarius subsp. asymbioticus)).